We begin with the raw amino-acid sequence, 98 residues long: NADH-ubiquinone oxidoreductase chain 4L (98 aa).

The next 3 membrane-spanning stretches (helical) occupy residues 1–21 (MTSINLNLTVAFSLALAGVLI), 28–48 (STLLCLEGMMLSLFVMMALLI), and 59–79 (APIILLVFSACEAGVGLALLV).

This sequence belongs to the complex I subunit 4L family. Core subunit of respiratory chain NADH dehydrogenase (Complex I) which is composed of 45 different subunits.

Its subcellular location is the mitochondrion inner membrane. The enzyme catalyses a ubiquinone + NADH + 5 H(+)(in) = a ubiquinol + NAD(+) + 4 H(+)(out). In terms of biological role, core subunit of the mitochondrial membrane respiratory chain NADH dehydrogenase (Complex I) which catalyzes electron transfer from NADH through the respiratory chain, using ubiquinone as an electron acceptor. Part of the enzyme membrane arm which is embedded in the lipid bilayer and involved in proton translocation. The chain is NADH-ubiquinone oxidoreductase chain 4L (MT-ND4L) from Trichosurus vulpecula (Brush-tailed possum).